The following is a 432-amino-acid chain: Trigger factor (432 aa).

The PPIase FKBP-type domain occupies 161–246; the sequence is EDRVTIDFTG…LKKVEERELP (86 aa).

The protein belongs to the FKBP-type PPIase family. Tig subfamily. In terms of assembly, homodimer and monomer. In vivo most of the ribosomes are in complex with monomeric TF. Uncomplexed TF, however, is in a monomer-dimer equilibrium with approximately two thirds of TF existing in a dimeric state.

It is found in the cytoplasm. It carries out the reaction [protein]-peptidylproline (omega=180) = [protein]-peptidylproline (omega=0). Its function is as follows. Involved in protein export. Acts as a chaperone by maintaining the newly synthesized protein in an open conformation. Functions as a peptidyl-prolyl cis-trans isomerase. This chain is Trigger factor, found in Shigella boydii serotype 18 (strain CDC 3083-94 / BS512).